Here is a 50-residue protein sequence, read N- to C-terminus: Large ribosomal subunit protein bL36B (50 aa).

Belongs to the bacterial ribosomal protein bL36 family.

This Pseudomonas aeruginosa (strain UCBPP-PA14) protein is Large ribosomal subunit protein bL36B.